The primary structure comprises 568 residues: 2-succinyl-5-enolpyruvyl-6-hydroxy-3-cyclohexene-1-carboxylate synthase (568 aa).

Belongs to the TPP enzyme family. MenD subfamily. In terms of assembly, homodimer. Mg(2+) serves as cofactor. It depends on Mn(2+) as a cofactor. Requires thiamine diphosphate as cofactor.

It carries out the reaction isochorismate + 2-oxoglutarate + H(+) = 5-enolpyruvoyl-6-hydroxy-2-succinyl-cyclohex-3-ene-1-carboxylate + CO2. It functions in the pathway quinol/quinone metabolism; 1,4-dihydroxy-2-naphthoate biosynthesis; 1,4-dihydroxy-2-naphthoate from chorismate: step 2/7. Its pathway is quinol/quinone metabolism; menaquinone biosynthesis. In terms of biological role, catalyzes the thiamine diphosphate-dependent decarboxylation of 2-oxoglutarate and the subsequent addition of the resulting succinic semialdehyde-thiamine pyrophosphate anion to isochorismate to yield 2-succinyl-5-enolpyruvyl-6-hydroxy-3-cyclohexene-1-carboxylate (SEPHCHC). The polypeptide is 2-succinyl-5-enolpyruvyl-6-hydroxy-3-cyclohexene-1-carboxylate synthase (Actinobacillus pleuropneumoniae serotype 5b (strain L20)).